The primary structure comprises 1225 residues: uncharacterized protein (1225 aa).

An N-terminal signal peptide occupies residues 1–27 (MKRFLHRVKWPLLLSSIAVSLGIVAVA). Cys-28 is lipidated: N-palmitoyl cysteine. The S-diacylglycerol cysteine moiety is linked to residue Cys-28. The interval 995–1014 (QSEKSSSNGGQAQLQSTQSS) is disordered.

This sequence belongs to the MG307/MG309/MG338 family.

It localises to the cell membrane. This is an uncharacterized protein from Mycoplasma genitalium (strain ATCC 33530 / DSM 19775 / NCTC 10195 / G37) (Mycoplasmoides genitalium).